Reading from the N-terminus, the 645-residue chain is Sodium/hydrogen exchanger 9 (645 aa).

At 1–20 the chain is on the lumenal side; that stretch reads MERQSRVMSEKDEYQFQHQG. The chain crosses the membrane as a helical span at residues 21-41; it reads AVELLVFNFLLILTILTIWLF. The Cytoplasmic segment spans residues 42-45; that stretch reads KNHR. A helical membrane pass occupies residues 46 to 66; sequence FRFLHETGGAMVYGLIMGLIL. Topologically, residues 67–126 are lumenal; it reads RYATAPTDIESGTVYDCVKLTFSPSTLLVNITDQVYEYKYKREISQHNINPHQGNAILEK. N96 is a glycosylation site (N-linked (GlcNAc...) asparagine). The chain crosses the membrane as a helical span at residues 127-147; that stretch reads MTFDPEIFFNVLLPPIIFHAG. Residues 148–164 lie on the Cytoplasmic side of the membrane; sequence YSLKKRHFFQNLGSILT. Residues 165-185 traverse the membrane as a helical segment; it reads YAFLGTAISCIVIGLIMYGFV. At 186-203 the chain is on the lumenal side; the sequence is KAMIHAGQLKNGDFHFTD. A helical membrane pass occupies residues 204–224; that stretch reads CLFFGSLMSATDPVTVLAIFH. Topologically, residues 225-235 are cytoplasmic; it reads ELHVDPDLYTL. Residues 236–256 traverse the membrane as a helical segment; it reads LFGESVLNDAVAIVLTYSISI. Residues 257 to 277 lie on the Lumenal side of the membrane; sequence YSPKENPNAFDAAAFFQSVGN. Residues 278 to 298 traverse the membrane as a helical segment; sequence FLGIFAGSFAMGSAYAIITAL. At 299-301 the chain is on the cytoplasmic side; that stretch reads LTK. 2 helical membrane-spanning segments follow: residues 302 to 322 and 323 to 343; these read FTKL…LSWS and AFLS…FCGV. The Cytoplasmic portion of the chain corresponds to 344–364; it reads TQAHYTYNNLSSDSKIRTKQL. The chain crosses the membrane as a helical span at residues 365–385; sequence FEFMNFLAENVIFCYMGLALF. Position 386 (T386) is a topological domain, lumenal. The chain crosses the membrane as a helical span at residues 387–407; sequence FQNHIFNALFILGAFLAIFVA. At 408 to 429 the chain is on the cytoplasmic side; sequence RACNIYPLSFLLNLGRKQKIPW. Residues 430 to 450 traverse the membrane as a helical segment; the sequence is NFQHMMMFSGLRGAIAFALAI. The Lumenal portion of the chain corresponds to 451-465; sequence RNTESQPKQMMFTTT. Residues 466–486 traverse the membrane as a helical segment; that stretch reads LLLVFFTVWVFGGGTTPMLTW. Residues 487–645 are Cytoplasmic-facing; sequence LQIRVGVDLD…EQTLGQSQLN (159 aa). The interval 594–622 is disordered; it reads QASSPCSPPARLGLDQKASPQTPGKENIY.

Belongs to the monovalent cation:proton antiporter 1 (CPA1) transporter (TC 2.A.36) family. Homodimer; phosphatidylinositol-4,5-bisphosphate (PIP2) and phosphatidylinositol 3,4,5-trisphosphate (PIP3) could be involved in the dimer stabilization. Interacts (via the C-terminus) with RACK1. Interacts with CHP1. Ubiquitously expressed in all tissues tested. Expressed at highest levels in heart and skeletal muscle, followed by placenta, kidney, and liver. Expressed in the brain, in the medulla and spinal cord.

The protein localises to the late endosome membrane. Its subcellular location is the early endosome membrane. It localises to the recycling endosome membrane. It is found in the cell membrane. The protein resides in the cytoplasmic vesicle. The protein localises to the phagosome membrane. It catalyses the reaction Na(+)(in) + H(+)(out) = Na(+)(out) + H(+)(in). The catalysed reaction is K(+)(in) + H(+)(out) = K(+)(out) + H(+)(in). Functionally, endosomal Na(+), K(+)/H(+) antiporter. Mediates the electroneutral exchange of endosomal luminal H(+) for a cytosolic Na(+) or K(+). By facilitating proton efflux, SLC9A9 counteracts the acidity generated by vacuolar (V)-ATPase, thereby limiting luminal acidification. Regulates organellar pH and consequently, e.g., endosome maturation and endocytic trafficking of plasma membrane receptors and neurotransporters. Promotes the recycling of transferrin receptors back to the cell surface to facilitate additional iron uptake in the brain. Regulates synaptic transmission by regulating the luminal pH of axonal endosomes. Regulates phagosome lumenal pH, thus affecting phagosome maturation, and consequently, microbicidal activity in macrophages. Can also be active at the cell surface of specialized cells, e.g., in the inner ear hair bundles uses the high K(+) of the endolymph to regulate intracelular pH. This Homo sapiens (Human) protein is Sodium/hydrogen exchanger 9.